A 496-amino-acid chain; its full sequence is Aldehyde dehydrogenase (496 aa).

Residues Glu263 and Cys296 contribute to the active site.

It belongs to the aldehyde dehydrogenase family.

It is found in the cytoplasm. It carries out the reaction an aldehyde + NAD(+) + H2O = a carboxylate + NADH + 2 H(+). The chain is Aldehyde dehydrogenase (CLAH10) from Davidiella tassiana (Mycosphaerella tassiana).